A 272-amino-acid chain; its full sequence is Magnetosome protein MamQ 1 (272 aa).

Over 1-46 (MALGDANVGSAPGVDFSALQRVKQSEELLAQLYVVEETPRRLGRGP) the chain is Cytoplasmic. Residues 47 to 67 (VHALMVISVLSVVAFIATLLM) traverse the membrane as a helical segment. Topologically, residues 68-272 (RYNTFVTMSE…PLNHAQDIKK (205 aa)) are lumenal.

It belongs to the LemA family.

The protein localises to the magnetosome membrane. Its function is as follows. Essential for magnetosome formation. Can be used to induce magnetosome formation. This is Magnetosome protein MamQ 1 (mamQ1) from Paramagnetospirillum magneticum (strain ATCC 700264 / AMB-1) (Magnetospirillum magneticum).